Consider the following 1099-residue polypeptide: MPRREDIKRILVIGSGPITIGQAAEFDYSGTQALKALKSAGYEVIIVNSNSATIMTDPEFSDAVYIEPLTVEFLEEIIKKERPDALLPTLGGQTALNLAVELAESGILDRYGVQLIGAKLESIKKAEDRELFKKTMEEAGLEVLRSRLVNNLTDALETAREFGYPVIIRPSFTLGGTGGGVAFNEEELREIVTKGLIESPVHTVLIEESVIGWKEYELEVVRDGAGNFIVVCSIENLDPMGIHTGDSITVAPSQTLTDVEYQRMRDAAYKVIDAIGIETGGSNIQFAVDPKTGRMVVIEMNPRVSRSSALASKATGYPIAKIAALLAVGFTLDEIPNYITGKTLAAFEPSIDYVVVKIPRFQLEKFPGADPRLNTQMKSVGEVMAIGRTFKEALGKALRSLELDAAPKLDLDHIREHLANPTPERISYIFAAFRNGMDVEEVHELTKIDRWFLREMKACIDLEEELKEKKFDVEVLRKAKQWGYSDREIAEIWQVSEKDVRKMREKNRIFPVYKMVDTCAAEFEAQTPYYYSTYNGVENEAIPTDKEKIMILGSGPNRIGQGIEFDYTNVHGVWAFQEEGYEAIMVNSNPETVSTDYDTSDRLYFEPLTVEDVLEIVRNEKPKGVVVAFGGQTPLRIARHLVEEGVNIIGTSFESIEIAEDREKFAKLLKRIGLRCPPFGTASSVEEALKVAEDLGYPVLVRPSYVLGGRAMAIVDTPEELERYVREAAIVSPGYPILIDKFLEDAIELDVDVVSDGKYVWIAGLMEQIEEAGVHSGDSACVLPPVSLSEKLVEEIEKTVHRLVKALKIVGIANIQMAVKDEEIYIIEANPRASRTVPFVSKAIGIPVAKIAAKIMVGRSLPELLSEYFPYPTRPGTKVDKLGDSEILPTPWPRMFSVKEVVIPFHKFPGTDVLLGPEMRSTGEVMGIGEDFAEAFAKAEIAAGNPLPTEGAILATIADKDKRDAIPLLAHLADMGFEIYATKGTAKALQSHGVDVKVVPKVGEGRPDVIDLLEQGKISLVVITQSSDEPSLVAVSHGKDPFKVEGRRTVGYMIRTTALKRKIPYLTTVEALRAAVAAIRKMKRGSIVKVRKLTDTWKM.

Residues 1 to 402 form a carboxyphosphate synthetic domain region; that stretch reads MPRREDIKRI…ALGKALRSLE (402 aa). 12 residues coordinate ATP: Arg-129, Arg-169, Gly-175, Gly-176, Glu-208, Val-210, Glu-215, Gly-241, Ile-242, His-243, Gln-285, and Glu-299. Positions 133–328 constitute an ATP-grasp 1 domain; sequence KKTMEEAGLE…IAKIAALLAV (196 aa). Residues Gln-285, Glu-299, and Asn-301 each contribute to the Mg(2+) site. Residues Gln-285, Glu-299, and Asn-301 each contribute to the Mn(2+) site. An oligomerization domain region spans residues 403–541; the sequence is LDAAPKLDLD…STYNGVENEA (139 aa). The carbamoyl phosphate synthetic domain stretch occupies residues 542–944; sequence IPTDKEKIMI…AFAKAEIAAG (403 aa). The ATP-grasp 2 domain maps to 666–857; it reads AKLLKRIGLR…VAKIAAKIMV (192 aa). Residues Arg-702, Lys-741, Leu-743, Glu-748, Gly-773, Val-774, His-775, Ser-776, Gln-816, and Glu-828 each coordinate ATP. The Mg(2+) site is built by Gln-816, Glu-828, and Asn-830. Gln-816, Glu-828, and Asn-830 together coordinate Mn(2+). One can recognise an MGS-like domain in the interval 945-1099; that stretch reads NPLPTEGAIL…VRKLTDTWKM (155 aa). Residues 945 to 1099 are allosteric domain; that stretch reads NPLPTEGAIL…VRKLTDTWKM (155 aa).

Belongs to the CarB family. Composed of two chains; the small (or glutamine) chain promotes the hydrolysis of glutamine to ammonia, which is used by the large (or ammonia) chain to synthesize carbamoyl phosphate. Tetramer of heterodimers (alpha,beta)4. Requires Mg(2+) as cofactor. The cofactor is Mn(2+).

It carries out the reaction hydrogencarbonate + L-glutamine + 2 ATP + H2O = carbamoyl phosphate + L-glutamate + 2 ADP + phosphate + 2 H(+). The catalysed reaction is hydrogencarbonate + NH4(+) + 2 ATP = carbamoyl phosphate + 2 ADP + phosphate + 2 H(+). It participates in amino-acid biosynthesis; L-arginine biosynthesis; carbamoyl phosphate from bicarbonate: step 1/1. The protein operates within pyrimidine metabolism; UMP biosynthesis via de novo pathway; (S)-dihydroorotate from bicarbonate: step 1/3. Functionally, large subunit of the glutamine-dependent carbamoyl phosphate synthetase (CPSase). CPSase catalyzes the formation of carbamoyl phosphate from the ammonia moiety of glutamine, carbonate, and phosphate donated by ATP, constituting the first step of 2 biosynthetic pathways, one leading to arginine and/or urea and the other to pyrimidine nucleotides. The large subunit (synthetase) binds the substrates ammonia (free or transferred from glutamine from the small subunit), hydrogencarbonate and ATP and carries out an ATP-coupled ligase reaction, activating hydrogencarbonate by forming carboxy phosphate which reacts with ammonia to form carbamoyl phosphate. The sequence is that of Carbamoyl phosphate synthase large chain from Thermotoga neapolitana (strain ATCC 49049 / DSM 4359 / NBRC 107923 / NS-E).